The sequence spans 260 residues: Proteasome assembly chaperone 2 (260 aa).

It belongs to the PSMG2 family. In terms of assembly, forms a heterodimer with psmg1. Degraded by the proteasome upon completion of 20S proteasome maturation.

It localises to the nucleus. Chaperone protein which promotes assembly of the 20S proteasome as part of a heterodimer with psmg1. The chain is Proteasome assembly chaperone 2 from Danio rerio (Zebrafish).